We begin with the raw amino-acid sequence, 375 residues long: Aminomethyltransferase (375 aa).

The protein belongs to the GcvT family. In terms of assembly, the glycine cleavage system is composed of four proteins: P, T, L and H.

It carries out the reaction N(6)-[(R)-S(8)-aminomethyldihydrolipoyl]-L-lysyl-[protein] + (6S)-5,6,7,8-tetrahydrofolate = N(6)-[(R)-dihydrolipoyl]-L-lysyl-[protein] + (6R)-5,10-methylene-5,6,7,8-tetrahydrofolate + NH4(+). The glycine cleavage system catalyzes the degradation of glycine. This Symbiobacterium thermophilum (strain DSM 24528 / JCM 14929 / IAM 14863 / T) protein is Aminomethyltransferase.